Here is a 306-residue protein sequence, read N- to C-terminus: Curved DNA-binding protein (306 aa).

The region spanning Asp-5–Trp-69 is the J domain.

It is found in the cytoplasm. The protein resides in the nucleoid. Functionally, DNA-binding protein that preferentially recognizes a curved DNA sequence. It is probably a functional analog of DnaJ; displays overlapping activities with DnaJ, but functions under different conditions, probably acting as a molecular chaperone in an adaptive response to environmental stresses other than heat shock. Lacks autonomous chaperone activity; binds native substrates and targets them for recognition by DnaK. Its activity is inhibited by the binding of CbpM. The protein is Curved DNA-binding protein of Salmonella paratyphi A (strain ATCC 9150 / SARB42).